The primary structure comprises 238 residues: Probable tetraspanin tspC (238 aa).

Topologically, residues 1–16 (MVNTRDFLPKTTHYLK) are cytoplasmic. Residues 17–37 (VPIIGLNAILWLLGLVLIVVG) form a helical membrane-spanning segment. Residues 38–69 (SVCISFFSNFKEFTKESGYKNALSNLTTSAPT) are Extracellular-facing. N-linked (GlcNAc...) asparagine glycosylation is present at Asn-62. The helical transmembrane segment at 70-90 (GVLVIGIFFILLTLVGCFVAY) threads the bilayer. Residues 91 to 93 (KEK) are Cytoplasmic-facing. Residues 94–114 (LVGLVLYTMLMLILLVVLIGI) traverse the membrane as a helical segment. Topologically, residues 115–197 (GGKALTLDKE…GIFTKQVSSK (83 aa)) are extracellular. Residues Asn-143 and Asn-164 are each glycosylated (N-linked (GlcNAc...) asparagine). A helical membrane pass occupies residues 198–218 (LVLVGIAGVVIGCIEFVAMAL). The Cytoplasmic portion of the chain corresponds to 219 to 238 (SLFLIIRICRSPRSRAYDQY).

It belongs to the tetraspanin (TM4SF) family.

It localises to the membrane. This Dictyostelium discoideum (Social amoeba) protein is Probable tetraspanin tspC (tspC).